A 480-amino-acid chain; its full sequence is Histone-lysine N-methyltransferase ASHR1 (480 aa).

Residues 11-248 (RCLGVSNLPQ…KDSEITISYI (238 aa)) form the SET domain. Residues Cys-56, Cys-59, Cys-68, Cys-71, Cys-77, Cys-81, His-89, and Cys-93 each coordinate Zn(2+). The segment at 56–93 (CDGCFKTNNLKKCSACQVVWYCGSSCQKSEWKLHRDEC) adopts an MYND-type zinc-finger fold.

This sequence belongs to the class V-like SAM-binding methyltransferase superfamily. Histone-lysine methyltransferase family. SET2 subfamily.

It is found in the nucleus. It localises to the chromosome. It carries out the reaction L-lysyl-[histone] + S-adenosyl-L-methionine = N(6)-methyl-L-lysyl-[histone] + S-adenosyl-L-homocysteine + H(+). Histone methyltransferase. This chain is Histone-lysine N-methyltransferase ASHR1 (ASHR1), found in Arabidopsis thaliana (Mouse-ear cress).